The primary structure comprises 335 residues: RNA 3'-terminal phosphate cyclase (335 aa).

ATP is bound by residues Q101 and H282–D285. H306 functions as the Tele-AMP-histidine intermediate in the catalytic mechanism.

The protein belongs to the RNA 3'-terminal cyclase family. Type 1 subfamily.

It localises to the cytoplasm. The enzyme catalyses a 3'-end 3'-phospho-ribonucleotide-RNA + ATP = a 3'-end 2',3'-cyclophospho-ribonucleotide-RNA + AMP + diphosphate. In terms of biological role, catalyzes the conversion of 3'-phosphate to a 2',3'-cyclic phosphodiester at the end of RNA. The mechanism of action of the enzyme occurs in 3 steps: (A) adenylation of the enzyme by ATP; (B) transfer of adenylate to an RNA-N3'P to produce RNA-N3'PP5'A; (C) and attack of the adjacent 2'-hydroxyl on the 3'-phosphorus in the diester linkage to produce the cyclic end product. The biological role of this enzyme is unknown but it is likely to function in some aspects of cellular RNA processing. The polypeptide is RNA 3'-terminal phosphate cyclase (Sulfolobus acidocaldarius (strain ATCC 33909 / DSM 639 / JCM 8929 / NBRC 15157 / NCIMB 11770)).